The chain runs to 110 residues: uncharacterized protein (110 aa).

It localises to the plastid. The protein localises to the chloroplast. This is an uncharacterized protein from Auxenochlorella pyrenoidosa (Freshwater green alga).